A 332-amino-acid polypeptide reads, in one-letter code: RNA polymerase II holoenzyme cyclin-like subunit (332 aa).

One can recognise a Cyclin N-terminal domain in the interval 74 to 175 (RIYCYFLIMK…LIEELQSYMI (102 aa)).

This sequence belongs to the cyclin family. Cyclin C subfamily. As to quaternary structure, component of the SRB8-11 complex, a regulatory module of the Mediator complex.

The protein localises to the nucleus. Component of the SRB8-11 complex. The SRB8-11 complex is a regulatory module of the Mediator complex which is itself involved in regulation of basal and activated RNA polymerase II-dependent transcription. The SRB8-11 complex may be involved in the transcriptional repression of a subset of genes regulated by Mediator. It may inhibit the association of the Mediator complex with RNA polymerase II to form the holoenzyme complex. The SRB8-11 complex phosphorylates the C-terminal domain (CTD) of the largest subunit of RNA polymerase II. The protein is RNA polymerase II holoenzyme cyclin-like subunit (SSN8) of Eremothecium gossypii (strain ATCC 10895 / CBS 109.51 / FGSC 9923 / NRRL Y-1056) (Yeast).